The chain runs to 249 residues: Aspartate/glutamate leucyltransferase (249 aa).

It belongs to the R-transferase family. Bpt subfamily.

It is found in the cytoplasm. The enzyme catalyses N-terminal L-glutamyl-[protein] + L-leucyl-tRNA(Leu) = N-terminal L-leucyl-L-glutamyl-[protein] + tRNA(Leu) + H(+). The catalysed reaction is N-terminal L-aspartyl-[protein] + L-leucyl-tRNA(Leu) = N-terminal L-leucyl-L-aspartyl-[protein] + tRNA(Leu) + H(+). Functionally, functions in the N-end rule pathway of protein degradation where it conjugates Leu from its aminoacyl-tRNA to the N-termini of proteins containing an N-terminal aspartate or glutamate. This chain is Aspartate/glutamate leucyltransferase, found in Azorhizobium caulinodans (strain ATCC 43989 / DSM 5975 / JCM 20966 / LMG 6465 / NBRC 14845 / NCIMB 13405 / ORS 571).